The sequence spans 242 residues: Triosephosphate isomerase (242 aa).

Residue 9–11 participates in substrate binding; the sequence is NWK. The active-site Electrophile is the His-90. Glu-162 serves as the catalytic Proton acceptor. Residues Gly-168, Ser-205, and 226–227 contribute to the substrate site; that span reads GG.

The protein belongs to the triosephosphate isomerase family. In terms of assembly, homodimer.

It localises to the cytoplasm. The catalysed reaction is D-glyceraldehyde 3-phosphate = dihydroxyacetone phosphate. It participates in carbohydrate biosynthesis; gluconeogenesis. The protein operates within carbohydrate degradation; glycolysis; D-glyceraldehyde 3-phosphate from glycerone phosphate: step 1/1. Functionally, involved in the gluconeogenesis. Catalyzes stereospecifically the conversion of dihydroxyacetone phosphate (DHAP) to D-glyceraldehyde-3-phosphate (G3P). The protein is Triosephosphate isomerase of Azoarcus sp. (strain BH72).